A 938-amino-acid chain; its full sequence is TFIIH basal transcription factor complex helicase/translocase XPB subunit (938 aa).

The 169-residue stretch at 394–562 folds into the Helicase ATP-binding domain; the sequence is FRSGNKAHQG…DLRHLVGPKL (169 aa). An ATP-binding site is contributed by 407 to 414; it reads LPCGAGKT. A DEVH box motif is present at residues 515-518; the sequence is DEVH. Positions 627–781 constitute a Helicase C-terminal domain; sequence WCTQALLEFH…SYRVLQSDMV (155 aa).

The protein belongs to the helicase family. RAD25/XPB subfamily. Component of the 7-subunit TFIIH core complex composed of XPB, XPD, SSL1, TFB1, TFB2, TFB4 and TFB5.

The catalysed reaction is Couples ATP hydrolysis with the unwinding of duplex DNA by translocating in the 3'-5' direction.. It catalyses the reaction ATP + H2O = ADP + phosphate + H(+). Functionally, ATP-dependent 3'-5' DNA helicase/translocase; binds dsDNA rather than ssDNA, unzipping it in a translocase rather than classical helicase activity. Component of the general transcription factor IIH (TFIIH) core complex, involved in spliced leader RNA (SL RNA) gene transcription by RNA polymerase II. TFIIH has an essential role in transcription initiation. When the pre-initiation complex (PIC) has been established, TFIIH is required for promoter opening and promoter escape. The ATPase activity of XPB is required for promoter opening and promoter escape. This chain is TFIIH basal transcription factor complex helicase/translocase XPB subunit, found in Trypanosoma brucei brucei (strain 927/4 GUTat10.1).